Consider the following 303-residue polypeptide: Lipoyl synthase (303 aa).

Residues Cys-35, Cys-40, Cys-46, Cys-61, Cys-65, Cys-68, and Ser-273 each contribute to the [4Fe-4S] cluster site. One can recognise a Radical SAM core domain in the interval Phe-47–Arg-262.

Belongs to the radical SAM superfamily. Lipoyl synthase family. [4Fe-4S] cluster is required as a cofactor.

It localises to the cytoplasm. It catalyses the reaction [[Fe-S] cluster scaffold protein carrying a second [4Fe-4S](2+) cluster] + N(6)-octanoyl-L-lysyl-[protein] + 2 oxidized [2Fe-2S]-[ferredoxin] + 2 S-adenosyl-L-methionine + 4 H(+) = [[Fe-S] cluster scaffold protein] + N(6)-[(R)-dihydrolipoyl]-L-lysyl-[protein] + 4 Fe(3+) + 2 hydrogen sulfide + 2 5'-deoxyadenosine + 2 L-methionine + 2 reduced [2Fe-2S]-[ferredoxin]. Its pathway is protein modification; protein lipoylation via endogenous pathway; protein N(6)-(lipoyl)lysine from octanoyl-[acyl-carrier-protein]: step 2/2. Functionally, catalyzes the radical-mediated insertion of two sulfur atoms into the C-6 and C-8 positions of the octanoyl moiety bound to the lipoyl domains of lipoate-dependent enzymes, thereby converting the octanoylated domains into lipoylated derivatives. The chain is Lipoyl synthase from Geobacter sulfurreducens (strain ATCC 51573 / DSM 12127 / PCA).